The sequence spans 286 residues: 2-hydroxy-6-oxo-6-phenylhexa-2,4-dienoate hydrolase (286 aa).

The region spanning V36–H271 is the AB hydrolase-1 domain. Substrate contacts are provided by residues G42–G43, N51, N111, S180, and R190. The Proton acceptor role is filled by H265. W266 provides a ligand contact to substrate.

Belongs to the AB hydrolase superfamily. BphD family. Homodimer.

It catalyses the reaction 2,6-dioxo-6-phenylhexa-3-enoate + H2O = 2-oxopent-4-enoate + benzoate + H(+). It participates in xenobiotic degradation; biphenyl degradation; 2-hydroxy-2,4-pentadienoate and benzoate from biphenyl: step 4/4. In terms of biological role, catalyzes an unusual C-C bond hydrolysis of 2-hydroxy-6-oxo-6-phenylhexa-2,4-dienoic acid (HOPDA) to produce benzoic acid and 2-hydroxy-2,4-pentadienoic acid (HPD). The polypeptide is 2-hydroxy-6-oxo-6-phenylhexa-2,4-dienoate hydrolase (Burkholderia cepacia (Pseudomonas cepacia)).